Here is a 294-residue protein sequence, read N- to C-terminus: Cyclin-G1 (294 aa).

This sequence belongs to the cyclin family. Cyclin G subfamily. In terms of assembly, binds to B' regulatory B subunits of protein phosphatase A (PP2A) following induction by p53 (in vitro). Highest levels in kidney, heart and skeletal muscle.

It localises to the nucleus. Functionally, may play a role in growth regulation. Is associated with G2/M phase arrest in response to DNA damage. May be an intermediate by which p53 mediates its role as an inhibitor of cellular proliferation. The protein is Cyclin-G1 (Ccng1) of Mus musculus (Mouse).